The primary structure comprises 232 residues: Orotidine 5'-phosphate decarboxylase (232 aa).

Substrate contacts are provided by residues aspartate 13, lysine 35, 62 to 71, threonine 122, arginine 182, glutamine 191, glycine 211, and arginine 212; that span reads DLKFHDIPNT. Residue lysine 64 is the Proton donor of the active site.

This sequence belongs to the OMP decarboxylase family. Type 1 subfamily. Homodimer.

It catalyses the reaction orotidine 5'-phosphate + H(+) = UMP + CO2. The protein operates within pyrimidine metabolism; UMP biosynthesis via de novo pathway; UMP from orotate: step 2/2. Catalyzes the decarboxylation of orotidine 5'-monophosphate (OMP) to uridine 5'-monophosphate (UMP). The protein is Orotidine 5'-phosphate decarboxylase of Pseudomonas aeruginosa (strain LESB58).